Here is a 345-residue protein sequence, read N- to C-terminus: Protein RecA (345 aa).

65-72 (GPESSGKT) serves as a coordination point for ATP. Basic and acidic residues predominate over residues 326-336 (EKFQPAEAARE). The tract at residues 326–345 (EKFQPAEAAREEGDDEGEDE) is disordered.

Belongs to the RecA family.

It localises to the cytoplasm. Can catalyze the hydrolysis of ATP in the presence of single-stranded DNA, the ATP-dependent uptake of single-stranded DNA by duplex DNA, and the ATP-dependent hybridization of homologous single-stranded DNAs. It interacts with LexA causing its activation and leading to its autocatalytic cleavage. The chain is Protein RecA from Stenotrophomonas maltophilia (strain K279a).